Reading from the N-terminus, the 117-residue chain is Large ribosomal subunit protein bL20c (117 aa).

It belongs to the bacterial ribosomal protein bL20 family.

The protein resides in the plastid. It localises to the chloroplast. In terms of biological role, binds directly to 23S ribosomal RNA and is necessary for the in vitro assembly process of the 50S ribosomal subunit. It is not involved in the protein synthesizing functions of that subunit. The chain is Large ribosomal subunit protein bL20c from Buxus microphylla (Littleleaf boxwood).